The following is a 401-amino-acid chain: Dual specificity mitogen-activated protein kinase kinase 2 (401 aa).

Position 1 is an N-acetylmethionine (Met-1). The residue at position 23 (Ser-23) is a Phosphoserine. One can recognise a Protein kinase domain in the interval 72–370 (FERISELGAG…LKLLMNHAFI (299 aa)). ATP is bound by residues 78–86 (LGAGNGGVV) and Lys-101. Asp-194 functions as the Proton acceptor in the catalytic mechanism. Residues Ser-222 and Ser-226 each carry the phosphoserine; by RAF modification. Positions 282–310 (PVVDGADGEPHSVSPRPRPPGRPISVGHG) are disordered. 3 positions are modified to phosphoserine: Ser-293, Ser-295, and Ser-306. 2 positions are modified to phosphothreonine: Thr-395 and Thr-397.

The protein belongs to the protein kinase superfamily. STE Ser/Thr protein kinase family. MAP kinase kinase subfamily. Interacts with MORG1. Interacts with SGK1. Interacts with KSR1. Interacts with KSR1 and BRAF; the interaction with KSR1 mediates KSR1-BRAF dimerization. Interacts with GLS. The cofactor is Mg(2+). In terms of processing, phosphorylation on Ser/Thr by MAP kinase kinase kinases (RAF or MEKK1) positively regulates the kinase activity. Phosphorylated by MAP2K1/MEK1. Low levels of autophosphorylation have been observed. In terms of tissue distribution, expressed in adult intestine, kidney, liver, lung, pancreas, spleen, thymus, and at high levels in the neonatal brain. Lower expression is found in adult brain and heart.

The protein localises to the cytoplasm. It is found in the membrane. It catalyses the reaction L-seryl-[protein] + ATP = O-phospho-L-seryl-[protein] + ADP + H(+). The catalysed reaction is L-threonyl-[protein] + ATP = O-phospho-L-threonyl-[protein] + ADP + H(+). The enzyme catalyses L-tyrosyl-[protein] + ATP = O-phospho-L-tyrosyl-[protein] + ADP + H(+). Inhibited by serine/threonine phosphatase 2A. Catalyzes the concomitant phosphorylation of a threonine and a tyrosine residue in a Thr-Glu-Tyr sequence located in MAP kinases. Activates the ERK1 and ERK2 MAP kinases. Activates BRAF in a KSR1 or KSR2-dependent manner; by binding to KSR1 or KSR2 releases the inhibitory intramolecular interaction between KSR1 or KSR2 protein kinase and N-terminal domains which promotes KSR1 or KSR2-BRAF dimerization and BRAF activation. This is Dual specificity mitogen-activated protein kinase kinase 2 (Map2k2) from Mus musculus (Mouse).